Reading from the N-terminus, the 215-residue chain is Redox-sensing transcriptional repressor Rex (215 aa).

A DNA-binding region (H-T-H motif) is located at residues 18-57 (LYYRFLKNLHASGKQRVSSAELSDAVKVDSATIRRDFSYF). 92–97 (GVGNLG) contacts NAD(+).

It belongs to the transcriptional regulatory Rex family. Homodimer.

It is found in the cytoplasm. Functionally, modulates transcription in response to changes in cellular NADH/NAD(+) redox state. The polypeptide is Redox-sensing transcriptional repressor Rex (Bacillus licheniformis (strain ATCC 14580 / DSM 13 / JCM 2505 / CCUG 7422 / NBRC 12200 / NCIMB 9375 / NCTC 10341 / NRRL NRS-1264 / Gibson 46)).